Reading from the N-terminus, the 333-residue chain is Probable tRNA pseudouridine synthase B (333 aa).

Residue aspartate 66 is the Nucleophile of the active site. Positions 233-308 (LKKIIVKDSA…EVVEITRVIM (76 aa)) constitute a PUA domain.

It belongs to the pseudouridine synthase TruB family. Type 2 subfamily.

It carries out the reaction uridine(55) in tRNA = pseudouridine(55) in tRNA. Its function is as follows. Could be responsible for synthesis of pseudouridine from uracil-55 in the psi GC loop of transfer RNAs. This chain is Probable tRNA pseudouridine synthase B, found in Methanococcus maripaludis (strain C5 / ATCC BAA-1333).